The following is a 270-amino-acid chain: Bark lectin (270 aa).

A signal peptide spans 1–15; that stretch reads ISITFFLLLLNKVNS. N-linked (GlcNAc...) asparagine glycosylation is found at Asn60, Asn76, and Asn127. Positions 141 and 143 each coordinate Mn(2+). Positions 143, 145, 147, and 150 each coordinate Ca(2+). Residues Asp150 and His155 each coordinate Mn(2+). Asn201 carries an N-linked (GlcNAc...) asparagine glycan.

Belongs to the leguminous lectin family.

Functionally, galNAc-specific lectin. This Styphnolobium japonicum (Japanese pagoda tree) protein is Bark lectin.